Reading from the N-terminus, the 60-residue chain is Large ribosomal subunit protein bL32 (60 aa).

A disordered region spans residues 1-36; that stretch reads MAVQQNKKSPSKRGMHRSHNALNTPGLAIEPTTGET. Basic residues predominate over residues 9-19; sequence SPSKRGMHRSH.

It belongs to the bacterial ribosomal protein bL32 family.

In Methylibium petroleiphilum (strain ATCC BAA-1232 / LMG 22953 / PM1), this protein is Large ribosomal subunit protein bL32.